A 413-amino-acid polypeptide reads, in one-letter code: Divalent metal cation transporter MntH (413 aa).

Residues 1–19 (MTDNRVENSSGRAARKLRL) lie on the Cytoplasmic side of the membrane. Residues 20-39 (ALMGPAFIAAIGYIDPGNFA) form a helical membrane-spanning segment. At 40–51 (TNIQAGASFGYQ) the chain is on the periplasmic side. The chain crosses the membrane as a helical span at residues 52–71 (LLWVVVWANLMAMLIQILSA). The Cytoplasmic segment spans residues 72–95 (KLGIATGKNLAEQIRDHYPRPVVW). A helical transmembrane segment spans residues 96–118 (FYWVQAEIIAMATDLAEFIGAAI). At 119–125 (GFKLILG) the chain is on the periplasmic side. A helical membrane pass occupies residues 126 to 145 (VSLLQGAVLTGIATFLILML). At 146 to 155 (QRRGQKPLEK) the chain is on the cytoplasmic side. The helical transmembrane segment at 156–175 (VIGGLLLFVAAAYIVELFFS) threads the bilayer. Residues 176–196 (QPDMAQLGKGMVIPALPNPEA) are Periplasmic-facing. A helical transmembrane segment spans residues 197–220 (VFLAAGVLGATIMPHVIYLHSSLT). Residues 221 to 238 (QHLHGGTRQQRYSATKWD) lie on the Cytoplasmic side of the membrane. Residues 239–258 (VAIAMTIAGFVNLAMMATAA) traverse the membrane as a helical segment. Topologically, residues 259–276 (AAFHFSGHTGIADLDQAY) are periplasmic. Residues 277–297 (LTLEPLLSHAAATVFGLSLVA) form a helical membrane-spanning segment. The Cytoplasmic portion of the chain corresponds to 298–327 (AGLSSTVVGTLAGQVVMQGFVRFHIPLWVR). The chain crosses the membrane as a helical span at residues 328–344 (RTITMLPSFIVILMGLD). Over 345–350 (PTRILV) the chain is Periplasmic. The helical transmembrane segment at 351–370 (MSQVLLSFGIALALVPLLIF) threads the bilayer. Residues 371-387 (TSNATLMGELVNTRRVK) are Cytoplasmic-facing. Residues 388–406 (QVGWIIVVLVVALNIWLLV) form a helical membrane-spanning segment. Over 407-413 (GTVMGLS) the chain is Periplasmic.

This sequence belongs to the NRAMP family.

Its subcellular location is the cell inner membrane. Its function is as follows. H(+)-stimulated, divalent metal cation uptake system. The protein is Divalent metal cation transporter MntH of Salmonella paratyphi C (strain RKS4594).